Reading from the N-terminus, the 117-residue chain is Large ribosomal subunit protein uL22 (117 aa).

The protein belongs to the universal ribosomal protein uL22 family. Part of the 50S ribosomal subunit.

Its function is as follows. This protein binds specifically to 23S rRNA; its binding is stimulated by other ribosomal proteins, e.g. L4, L17, and L20. It is important during the early stages of 50S assembly. It makes multiple contacts with different domains of the 23S rRNA in the assembled 50S subunit and ribosome. In terms of biological role, the globular domain of the protein is located near the polypeptide exit tunnel on the outside of the subunit, while an extended beta-hairpin is found that lines the wall of the exit tunnel in the center of the 70S ribosome. The protein is Large ribosomal subunit protein uL22 of Lactobacillus gasseri (strain ATCC 33323 / DSM 20243 / BCRC 14619 / CIP 102991 / JCM 1131 / KCTC 3163 / NCIMB 11718 / NCTC 13722 / AM63).